Reading from the N-terminus, the 341-residue chain is Phosphate acyltransferase (341 aa).

It belongs to the PlsX family. As to quaternary structure, homodimer. Probably interacts with PlsY.

It is found in the cytoplasm. It carries out the reaction a fatty acyl-[ACP] + phosphate = an acyl phosphate + holo-[ACP]. The protein operates within lipid metabolism; phospholipid metabolism. In terms of biological role, catalyzes the reversible formation of acyl-phosphate (acyl-PO(4)) from acyl-[acyl-carrier-protein] (acyl-ACP). This enzyme utilizes acyl-ACP as fatty acyl donor, but not acyl-CoA. This is Phosphate acyltransferase from Vibrio parahaemolyticus serotype O3:K6 (strain RIMD 2210633).